Consider the following 239-residue polypeptide: Uridylate kinase (239 aa).

10–13 (KFSG) contacts ATP. Residues 18–23 (GENGFG) are involved in allosteric activation by GTP. Position 52 (glycine 52) interacts with UMP. Positions 53 and 57 each coordinate ATP. UMP-binding positions include aspartate 73 and 134 to 141 (TGNPYFTT). ATP contacts are provided by threonine 161, tyrosine 167, and aspartate 170.

It belongs to the UMP kinase family. Homohexamer.

It is found in the cytoplasm. The catalysed reaction is UMP + ATP = UDP + ADP. The protein operates within pyrimidine metabolism; CTP biosynthesis via de novo pathway; UDP from UMP (UMPK route): step 1/1. With respect to regulation, allosterically activated by GTP. Inhibited by UTP. Its function is as follows. Catalyzes the reversible phosphorylation of UMP to UDP. The protein is Uridylate kinase of Campylobacter jejuni subsp. doylei (strain ATCC BAA-1458 / RM4099 / 269.97).